A 583-amino-acid polypeptide reads, in one-letter code: 15-cis-phytoene desaturase, chloroplastic/chromoplastic (583 aa).

The N-terminal 111 residues, 1-111 (MPQIGLVSAV…FRASPRPTKP (111 aa)), are a transit peptide targeting the chloroplast and chromoplast. FAD-binding positions include 118–134 (GAGLGGLSTAKYLADAG), 141–142 (EA), lysine 149, 166–167 (HI), and tyrosine 172. Residue arginine 307 participates in substrate binding. FAD contacts are provided by isoleucine 349 and aspartate 538. Position 546 (alanine 546) interacts with substrate. Position 548 (methionine 548) interacts with FAD.

Belongs to the carotenoid/retinoid oxidoreductase family. In terms of assembly, homotetramer. The cofactor is FAD.

It is found in the plastid. Its subcellular location is the chloroplast. It localises to the chromoplast. The protein resides in the membrane. The catalysed reaction is 2 a plastoquinone + 15-cis-phytoene = 9,9',15-tri-cis-zeta-carotene + 2 a plastoquinol. It participates in carotenoid biosynthesis; lycopene biosynthesis. Functionally, converts phytoene into zeta-carotene via the intermediary of phytofluene by the symmetrical introduction of two double bonds at the C-11 and C-11' positions of phytoene with a concomitant isomerization of two neighboring double bonds at the C9 and C9' positions from trans to cis. The protein is 15-cis-phytoene desaturase, chloroplastic/chromoplastic (PDS) of Solanum lycopersicum (Tomato).